The following is a 583-amino-acid chain: Selenocysteine-specific elongation factor (583 aa).

Residues Arg5–Thr203 enclose the tr-type G domain. The interval Gly14–Thr21 is G1. Gly19, Thr21, and Ala22 together coordinate GTP. Thr21 lines the Mg(2+) pocket. The G2 stretch occupies residues Gly46 to Asp50. Residues Thr48 and Asp78 each contribute to the Mg(2+) site. The tract at residues Asp78–Gly81 is G3. The segment at Asn132–Asp135 is G4. GTP-binding residues include Asp135 and Lys173. The interval Ala171 to Lys173 is G5. The segment at Met371–Gly390 is disordered. Ser524 bears the Phosphoserine mark. Residues Lys528 to Val562 are disordered. Position 532 is a phosphothreonine (Thr532). A Nuclear localization signal motif is present at residues Thr534–Arg540. A compositionally biased stretch (basic and acidic residues) spans Gly542 to Glu557. Residue Arg543 is modified to Omega-N-methylarginine.

The protein belongs to the TRAFAC class translation factor GTPase superfamily. Classic translation factor GTPase family. SelB subfamily. Mg(2+) serves as cofactor. Requires Mn(2+) as cofactor.

The protein resides in the cytoplasm. It is found in the nucleus. The catalysed reaction is GTP + H2O = GDP + phosphate + H(+). Translation factor required for the incorporation of the rare amino acid selenocysteine encoded by UGA codons. Replaces the eRF1-eRF3-GTP ternary complex for the insertion of selenocysteine directed by the UGA codon. Insertion of selenocysteine at UGA codons is mediated by SECISBP2 and EEFSEC: SECISBP2 (1) specifically binds the SECIS sequence once the 80S ribosome encounters an in-frame UGA codon and (2) contacts the RPS27A/eS31 of the 40S ribosome before ribosome stalling. (3) GTP-bound EEFSEC then delivers selenocysteinyl-tRNA(Sec) to the 80S ribosome and adopts a preaccommodated state conformation. (4) After GTP hydrolysis, EEFSEC dissociates from the assembly, selenocysteinyl-tRNA(Sec) accommodates, and peptide bond synthesis and selenoprotein elongation occur. The protein is Selenocysteine-specific elongation factor (Eefsec) of Mus musculus (Mouse).